A 292-amino-acid polypeptide reads, in one-letter code: T-box transcription factor tbx-9 (292 aa).

The T-box DNA-binding region spans 10-194; the sequence is GSQETLWKIF…HNSFAKGFRD (185 aa). 2 disordered regions span residues 192-227 and 265-292; these read FRDG…EVAP and STPS…DIVG. Low complexity-rich tracts occupy residues 204-223 and 265-275; these read PSYS…RSPP and STPSSSSSELS. Acidic residues predominate over residues 280–292; sequence EDQEVEEDIDIVG.

It localises to the nucleus. In terms of biological role, transcription factor. Involved in the control of early morphogenesis of the intestine, hypodermis and body-wall muscle. Involved in regulating expression of vab-7. Appears to have partially redundant function to tbx-8. Positively modulates expression of homeobox protein lin-39, perhaps by binding to regulatory regions of the lin-39 gene, acting in the vulval lineage. This chain is T-box transcription factor tbx-9 (tbx-9), found in Caenorhabditis elegans.